Here is a 406-residue protein sequence, read N- to C-terminus: Luteothin monooxygenase (406 aa).

Residues H98, R102, R296, G350, H353, and C355 each contribute to the heme b site.

This sequence belongs to the cytochrome P450 family. In terms of assembly, monomer. Requires heme b as cofactor.

It catalyses the reaction luteothin + 4 reduced [2Fe-2S]-[ferredoxin] + 2 O2 + 4 H(+) = aureothin + 4 oxidized [2Fe-2S]-[ferredoxin] + 3 H2O. The protein operates within antibiotic biosynthesis. It functions in the pathway polyketide biosynthesis. In terms of biological role, bifunctional cytochrome P450 protein involved in the biosynthesis of the antibiotic aureothin, a nitroaryl polyketide metabolite with antifungal, cytotoxic and insecticidal activities. Catalyzes the hydroxylation of luteothin (also called deoxyaureothin), leading to the formation of the intermediate (7R)-7-hydroxydeoxyaureothin, followed by the formation of the aureothin tetrahydrofuran ring, the final step in the biosynthesis of aureothin. This is Luteothin monooxygenase from Streptomyces thioluteus.